A 425-amino-acid polypeptide reads, in one-letter code: MLDLKFIRDNLDLVKRSIKARGLVLDIDKLIYLDDKRKKIITKIGELNAKRNENSSKMRENLDKVLKISLIETGKILKKQLIDLEEELERVSFDFDLENKRVPNILSPDVPIGNSEEDNFEIKKVGIIPRFDFKPKDHLELGRDLDLLDFDRAREVSGSKFYYLKNEAVFLEIALINFSLNKLREKGFNVFITPDVAREFIVDGIGFNPRGNESNIYKIEDTDKYLVGTSEITLGGYYYNKIIDLTLPIKMAGFSHCFRKEAGAYGQLSKGLYRVHQFSKVEMFCFCKAEESSIIHDEFLSIQEQIFTELEIPYRVLNICSFDLGSPAYKKYDIEAWMPGRDGKGGYGEITSTSNCTDYQSRRLKIRYKDQDGQNKFAHMVNGTAIATTRVIISILENFQDEKGGVKIPKSLVKYTGFDYIPFKN.

229 to 231 (TSE) contributes to the L-serine binding site. ATP is bound by residues 259 to 261 (RKE) and V275. Residue E282 coordinates L-serine. Residue 349-352 (EITS) participates in ATP binding. T384 contributes to the L-serine binding site.

The protein belongs to the class-II aminoacyl-tRNA synthetase family. Type-1 seryl-tRNA synthetase subfamily. In terms of assembly, homodimer. The tRNA molecule binds across the dimer.

The protein resides in the cytoplasm. It catalyses the reaction tRNA(Ser) + L-serine + ATP = L-seryl-tRNA(Ser) + AMP + diphosphate + H(+). It carries out the reaction tRNA(Sec) + L-serine + ATP = L-seryl-tRNA(Sec) + AMP + diphosphate + H(+). It functions in the pathway aminoacyl-tRNA biosynthesis; selenocysteinyl-tRNA(Sec) biosynthesis; L-seryl-tRNA(Sec) from L-serine and tRNA(Sec): step 1/1. In terms of biological role, catalyzes the attachment of serine to tRNA(Ser). Is also able to aminoacylate tRNA(Sec) with serine, to form the misacylated tRNA L-seryl-tRNA(Sec), which will be further converted into selenocysteinyl-tRNA(Sec). This is Serine--tRNA ligase from Borreliella afzelii (strain PKo) (Borrelia afzelii).